A 366-amino-acid chain; its full sequence is Chorismate synthase (366 aa).

Arginine 48 contributes to the NADP(+) binding site. Residues 125-127, glycine 283, 298-302, and arginine 324 contribute to the FMN site; these read RSS and KPTPS.

The protein belongs to the chorismate synthase family. As to quaternary structure, homotetramer. It depends on FMNH2 as a cofactor.

It catalyses the reaction 5-O-(1-carboxyvinyl)-3-phosphoshikimate = chorismate + phosphate. The protein operates within metabolic intermediate biosynthesis; chorismate biosynthesis; chorismate from D-erythrose 4-phosphate and phosphoenolpyruvate: step 7/7. Functionally, catalyzes the anti-1,4-elimination of the C-3 phosphate and the C-6 proR hydrogen from 5-enolpyruvylshikimate-3-phosphate (EPSP) to yield chorismate, which is the branch point compound that serves as the starting substrate for the three terminal pathways of aromatic amino acid biosynthesis. This reaction introduces a second double bond into the aromatic ring system. The sequence is that of Chorismate synthase from Lachnospira eligens (strain ATCC 27750 / DSM 3376 / VPI C15-48 / C15-B4) (Eubacterium eligens).